The chain runs to 383 residues: S-adenosylmethionine synthase (383 aa).

H15 serves as a coordination point for ATP. Position 17 (D17) interacts with Mg(2+). A K(+)-binding site is contributed by E43. E56 and Q99 together coordinate L-methionine. Residues 99 to 109 form a flexible loop region; sequence QSPDINQGVDR. ATP contacts are provided by residues 164–166, 230–231, D239, 245–246, A262, and K266; these read DAK, RF, and RK. Position 239 (D239) interacts with L-methionine. Residue K270 coordinates L-methionine.

It belongs to the AdoMet synthase family. As to quaternary structure, homotetramer; dimer of dimers. Mg(2+) serves as cofactor. K(+) is required as a cofactor.

The protein localises to the cytoplasm. The catalysed reaction is L-methionine + ATP + H2O = S-adenosyl-L-methionine + phosphate + diphosphate. The protein operates within amino-acid biosynthesis; S-adenosyl-L-methionine biosynthesis; S-adenosyl-L-methionine from L-methionine: step 1/1. Catalyzes the formation of S-adenosylmethionine (AdoMet) from methionine and ATP. The overall synthetic reaction is composed of two sequential steps, AdoMet formation and the subsequent tripolyphosphate hydrolysis which occurs prior to release of AdoMet from the enzyme. In Pectobacterium atrosepticum (strain SCRI 1043 / ATCC BAA-672) (Erwinia carotovora subsp. atroseptica), this protein is S-adenosylmethionine synthase.